Consider the following 447-residue polypeptide: GTPase Der (447 aa).

2 consecutive EngA-type G domains span residues 4 to 165 (QIIT…PEEE) and 180 to 357 (LQIV…KIWN). Residues 10–17 (GRPNVGKS), 57–61 (DTPGL), 119–122 (NKCE), 186–193 (GRPNAGKS), 233–237 (DTAGL), and 298–301 (NKWD) each bind GTP. One can recognise a KH-like domain in the interval 358–443 (KKITTSKLNE…PIRFIYVKTK (86 aa)).

The protein belongs to the TRAFAC class TrmE-Era-EngA-EngB-Septin-like GTPase superfamily. EngA (Der) GTPase family. In terms of assembly, associates with the 50S ribosomal subunit.

Functionally, GTPase that plays an essential role in the late steps of ribosome biogenesis. The protein is GTPase Der of Rickettsia peacockii (strain Rustic).